Here is a 408-residue protein sequence, read N- to C-terminus: Phosphoglycerate kinase (408 aa).

Residues 22–24 (DIN), arginine 39, 60–63 (HQSR), arginine 117, and arginine 157 each bind substrate. ATP is bound by residues glutamate 332 and 358–361 (GGHT).

This sequence belongs to the phosphoglycerate kinase family. Monomer.

It localises to the cytoplasm. The catalysed reaction is (2R)-3-phosphoglycerate + ATP = (2R)-3-phospho-glyceroyl phosphate + ADP. It functions in the pathway carbohydrate degradation; glycolysis; pyruvate from D-glyceraldehyde 3-phosphate: step 2/5. This is Phosphoglycerate kinase from Thermoplasma volcanium (strain ATCC 51530 / DSM 4299 / JCM 9571 / NBRC 15438 / GSS1).